The following is a 338-amino-acid chain: Anthranilate phosphoribosyltransferase (338 aa).

5-phospho-alpha-D-ribose 1-diphosphate is bound by residues Gly81, 84 to 85, Thr89, 91 to 94, 109 to 117, and Ser121; these read GD, NIST, and KHGNRSMVS. Gly81 contributes to the anthranilate binding site. Ser93 contacts Mg(2+). Anthranilate is bound at residue Asn112. Arg167 lines the anthranilate pocket. Positions 226 and 227 each coordinate Mg(2+).

It belongs to the anthranilate phosphoribosyltransferase family. In terms of assembly, homodimer. Mg(2+) is required as a cofactor.

The enzyme catalyses N-(5-phospho-beta-D-ribosyl)anthranilate + diphosphate = 5-phospho-alpha-D-ribose 1-diphosphate + anthranilate. The protein operates within amino-acid biosynthesis; L-tryptophan biosynthesis; L-tryptophan from chorismate: step 2/5. Functionally, catalyzes the transfer of the phosphoribosyl group of 5-phosphorylribose-1-pyrophosphate (PRPP) to anthranilate to yield N-(5'-phosphoribosyl)-anthranilate (PRA). This chain is Anthranilate phosphoribosyltransferase, found in Acidithiobacillus ferrooxidans (strain ATCC 23270 / DSM 14882 / CIP 104768 / NCIMB 8455) (Ferrobacillus ferrooxidans (strain ATCC 23270)).